The chain runs to 200 residues: Holliday junction branch migration complex subunit RuvA (200 aa).

Residues 1–63 (MIALLTGQIA…EDAILLYGFR (63 aa)) are domain I. Residues 64–142 (TRTEKSFFQL…KLDSGSIPAG (79 aa)) form a domain II region. Positions 143-153 (DAVGRSLPAGS) are flexible linker. The tract at residues 153–200 (SVLDDVSSALVNLGYKDPQVRKVLAELDCAGSASVEEVLKQALKILMK) is domain III.

Belongs to the RuvA family. As to quaternary structure, homotetramer. Forms an RuvA(8)-RuvB(12)-Holliday junction (HJ) complex. HJ DNA is sandwiched between 2 RuvA tetramers; dsDNA enters through RuvA and exits via RuvB. An RuvB hexamer assembles on each DNA strand where it exits the tetramer. Each RuvB hexamer is contacted by two RuvA subunits (via domain III) on 2 adjacent RuvB subunits; this complex drives branch migration. In the full resolvosome a probable DNA-RuvA(4)-RuvB(12)-RuvC(2) complex forms which resolves the HJ.

The protein localises to the cytoplasm. Its function is as follows. The RuvA-RuvB-RuvC complex processes Holliday junction (HJ) DNA during genetic recombination and DNA repair, while the RuvA-RuvB complex plays an important role in the rescue of blocked DNA replication forks via replication fork reversal (RFR). RuvA specifically binds to HJ cruciform DNA, conferring on it an open structure. The RuvB hexamer acts as an ATP-dependent pump, pulling dsDNA into and through the RuvAB complex. HJ branch migration allows RuvC to scan DNA until it finds its consensus sequence, where it cleaves and resolves the cruciform DNA. The protein is Holliday junction branch migration complex subunit RuvA of Trichlorobacter lovleyi (strain ATCC BAA-1151 / DSM 17278 / SZ) (Geobacter lovleyi).